The following is a 30-amino-acid chain: Scolopendra 20528.11 Da toxin (30 aa).

This sequence belongs to the CRISP family. Venom allergen 5-like subfamily. Contains 3 disulfide bonds. In terms of tissue distribution, expressed by the venom gland.

It is found in the secreted. This chain is Scolopendra 20528.11 Da toxin, found in Scolopendra angulata (Barbados giant red centipede).